Consider the following 530-residue polypeptide: MTRDFKPGDLIFAKMKGYPHWPARVDEVPDGAVKPPTNKLPIFFFGTHETAFLGPKDIFPYSENKEKYGKPNKRKGFNEGLWEIDNNPKVKFSSQQASAKQSNASSDVEVEEKETSVSKEDTDPEEKASNEDVTKAIDITTPKAARRGRKRKAEKQVETEEAGVVTTATASANLKVSPKRGRPAATEVKIPKPRGRPKMVKQPCPSESDMITEEDKSKKKGQEEKQPKKQLKKDEEGQKEEEKPRKEPDKKEGKKEVESKRKNLAKTGVTSTSDSEEEGDDQEGEKKRKGGRNFQTAHRRNMLKGQHEKEAADRKRKQEEQMETEQQNKDEGKKPEVKKVEKKRETSMDSRLQRIHAEIKNSLKIDNLDVNRCIEALDELASLQVTMQQAQKHTEMITTLKKIRRFKVSQVIMEKSTMLYNKFKNMFLVGEGDSVITQVLNKSLAEQRQHEEANKTKDQGKKGPNKKLEKEQTGSKTLNGGSDAQDSNQPQHNGDSNEESKDNHEASSKKKPSSEERETEISLKDSTLDN.

The PWWP domain occupies 1 to 64 (MTRDFKPGDL…PKDIFPYSEN (64 aa)). K75 participates in a covalent cross-link: Glycyl lysine isopeptide (Lys-Gly) (interchain with G-Cter in SUMO2). The disordered stretch occupies residues 88 to 349 (PKVKFSSQQA…VEKKRETSMD (262 aa)). Positions 93–107 (SSQQASAKQSNASSD) are enriched in low complexity. 3 positions are modified to phosphoserine: S102, S105, and S106. Basic and acidic residues predominate over residues 113–135 (KETSVSKEDTDPEEKASNEDVTK). Phosphothreonine is present on residues T115 and T122. Residue S129 is modified to Phosphoserine. A Phosphothreonine modification is found at T141. The span at 144–153 (AARRGRKRKA) shows a compositional bias: basic residues. The Nuclear localization signal signature appears at 146-156 (RRGRKRKAEKQ). Phosphothreonine is present on T167. Phosphoserine occurs at positions 177 and 206. Residues 213–261 (EEDKSKKKGQEEKQPKKQLKKDEEGQKEEEKPRKEPDKKEGKKEVESKR) show a composition bias toward basic and acidic residues. Position 271 is a phosphoserine (S271). T272 is subject to Phosphothreonine. Phosphoserine occurs at positions 273 and 275. Over residues 274-283 (DSEEEGDDQE) the composition is skewed to acidic residues. Over residues 287-302 (KRKGGRNFQTAHRRNM) the composition is skewed to basic residues. Residues 305-349 (GQHEKEAADRKRKQEEQMETEQQNKDEGKKPEVKKVEKKRETSMD) show a composition bias toward basic and acidic residues. 2 coiled-coil regions span residues 306–334 (QHEK…EGKK) and 371–395 (NRCI…KHTE). Residues 340–417 (VEKKRETSMD…VSQVIMEKST (78 aa)) form an integrase-binding domain (IBD) region. A Phosphoserine modification is found at S434. Phosphothreonine is present on T437. A Phosphoserine modification is found at S443. A compositionally biased stretch (basic and acidic residues) spans 446 to 473 (EQRQHEEANKTKDQGKKGPNKKLEKEQT). A disordered region spans residues 446–530 (EQRQHEEANK…ISLKDSTLDN (85 aa)). The span at 474–494 (GSKTLNGGSDAQDSNQPQHNG) shows a compositional bias: polar residues. Residues 498-530 (EESKDNHEASSKKKPSSEERETEISLKDSTLDN) show a composition bias toward basic and acidic residues. S514 is modified (phosphoserine). R517 carries the citrulline modification. At S522 the chain carries Phosphoserine. A Phosphothreonine modification is found at T527.

Belongs to the HDGF family. Monomer. Interacts with IFRD1/PC4. Interacts (via IBD domain) with POGZ (via IBM motif) and CDCA7L (via IBM motifs). Interacts (via IBD domain) with KMT2A (via IBM motifs) with a moderate affinity whereas interacts with the KMT2A-MEN1 complex with a greater affinity; MEN1 enhances interaction of KMT2A with PSIP1. Interacts (via IBD domain) with IWS1 (via IBM motif), MED1 (via IBM motif) and DBF4 (via IBM motifs). In terms of processing, citrullinated by PADI4.

It localises to the nucleus. Transcriptional coactivator involved in neuroepithelial stem cell differentiation and neurogenesis. Involved in particular in lens epithelial cell gene regulation and stress responses. May play an important role in lens epithelial to fiber cell terminal differentiation. May play a protective role during stress-induced apoptosis. The chain is PC4 and SFRS1-interacting protein (PSIP1) from Bos taurus (Bovine).